Here is a 417-residue protein sequence, read N- to C-terminus: Serine hydroxymethyltransferase (417 aa).

(6S)-5,6,7,8-tetrahydrofolate is bound by residues leucine 121 and 125-127; that span reads GHL. Lysine 229 carries the post-translational modification N6-(pyridoxal phosphate)lysine. Position 355-357 (355-357) interacts with (6S)-5,6,7,8-tetrahydrofolate; sequence SPF.

Belongs to the SHMT family. Homodimer. Pyridoxal 5'-phosphate serves as cofactor.

The protein resides in the cytoplasm. The enzyme catalyses (6R)-5,10-methylene-5,6,7,8-tetrahydrofolate + glycine + H2O = (6S)-5,6,7,8-tetrahydrofolate + L-serine. The protein operates within one-carbon metabolism; tetrahydrofolate interconversion. It participates in amino-acid biosynthesis; glycine biosynthesis; glycine from L-serine: step 1/1. Its function is as follows. Catalyzes the reversible interconversion of serine and glycine with tetrahydrofolate (THF) serving as the one-carbon carrier. This reaction serves as the major source of one-carbon groups required for the biosynthesis of purines, thymidylate, methionine, and other important biomolecules. Also exhibits THF-independent aldolase activity toward beta-hydroxyamino acids, producing glycine and aldehydes, via a retro-aldol mechanism. This is Serine hydroxymethyltransferase from Buchnera aphidicola subsp. Acyrthosiphon pisum (strain 5A).